A 332-amino-acid polypeptide reads, in one-letter code: 2,3-bisphosphoglycerate-dependent phosphoglycerate mutase 2 (332 aa).

A chloroplast-targeting transit peptide spans 1–48; sequence MATSTTMSHQAIGSVVSQRPFKASQFLKEPLNNVPMKFRQKRFKIEAT. Substrate contacts are provided by residues 85 to 92, 98 to 99, R135, 189 to 192, K200, 216 to 217, and 260 to 261; these read RHGESLWN, TG, ERMY, RR, and GN. The active-site Tele-phosphohistidine intermediate is H86. E189 functions as the Proton donor/acceptor in the catalytic mechanism.

It belongs to the phosphoglycerate mutase family. BPG-dependent PGAM subfamily.

The protein localises to the plastid. The protein resides in the chloroplast. The catalysed reaction is (2R)-2-phosphoglycerate = (2R)-3-phosphoglycerate. Its pathway is carbohydrate degradation; glycolysis; pyruvate from D-glyceraldehyde 3-phosphate: step 3/5. Functionally, catalyzes the interconversion of 2-phosphoglycerate and 3-phosphoglycerate. The polypeptide is 2,3-bisphosphoglycerate-dependent phosphoglycerate mutase 2 (Arabidopsis thaliana (Mouse-ear cress)).